A 265-amino-acid polypeptide reads, in one-letter code: Methylthioribulose-1-phosphate dehydratase (265 aa).

Cysteine 116 lines the substrate pocket. Residues histidine 134 and histidine 136 each coordinate Zn(2+). Glutamate 159 acts as the Proton donor/acceptor in catalysis. Residue histidine 224 participates in Zn(2+) binding.

This sequence belongs to the aldolase class II family. MtnB subfamily. It depends on Zn(2+) as a cofactor.

Its subcellular location is the cytoplasm. The catalysed reaction is 5-(methylsulfanyl)-D-ribulose 1-phosphate = 5-methylsulfanyl-2,3-dioxopentyl phosphate + H2O. The protein operates within amino-acid biosynthesis; L-methionine biosynthesis via salvage pathway; L-methionine from S-methyl-5-thio-alpha-D-ribose 1-phosphate: step 2/6. Functionally, catalyzes the dehydration of methylthioribulose-1-phosphate (MTRu-1-P) into 2,3-diketo-5-methylthiopentyl-1-phosphate (DK-MTP-1-P). This is Methylthioribulose-1-phosphate dehydratase from Debaryomyces hansenii (strain ATCC 36239 / CBS 767 / BCRC 21394 / JCM 1990 / NBRC 0083 / IGC 2968) (Yeast).